We begin with the raw amino-acid sequence, 389 residues long: S-adenosylmethionine synthase (389 aa).

Histidine 15 serves as a coordination point for ATP. Aspartate 17 contacts Mg(2+). Glutamate 43 is a K(+) binding site. Residues glutamate 56 and glutamine 99 each coordinate L-methionine. A flexible loop region spans residues 99–109; the sequence is QSPDIAQGVNE. Residues 166–168, 234–235, aspartate 243, 249–250, alanine 266, and lysine 270 each bind ATP; these read DAK, RF, and RK. Aspartate 243 lines the L-methionine pocket. Position 274 (lysine 274) interacts with L-methionine.

It belongs to the AdoMet synthase family. In terms of assembly, homotetramer; dimer of dimers. It depends on Mg(2+) as a cofactor. Requires K(+) as cofactor.

The protein localises to the cytoplasm. It carries out the reaction L-methionine + ATP + H2O = S-adenosyl-L-methionine + phosphate + diphosphate. The protein operates within amino-acid biosynthesis; S-adenosyl-L-methionine biosynthesis; S-adenosyl-L-methionine from L-methionine: step 1/1. Functionally, catalyzes the formation of S-adenosylmethionine (AdoMet) from methionine and ATP. The overall synthetic reaction is composed of two sequential steps, AdoMet formation and the subsequent tripolyphosphate hydrolysis which occurs prior to release of AdoMet from the enzyme. The polypeptide is S-adenosylmethionine synthase (Neisseria meningitidis serogroup C (strain 053442)).